We begin with the raw amino-acid sequence, 744 residues long: Leukocyte immunoglobulin-like receptor subfamily B member 3A (744 aa).

Positions 1 to 24 (MTFTFTALLCLGLTLGLWIPVLTG) are cleaved as a signal peptide. Over 25–543 (SLPKPILRVQ…PPDGLQRYLK (519 aa)) the chain is Extracellular. 5 Ig-like C2-type domains span residues 26–119 (LPKP…VVTG), 121–221 (YSKP…LVSG), 223–316 (LQKP…VVTG), 320–419 (YHPL…LITG), and 426–520 (FLSV…IVSG). Disulfide bonds link cysteine 49/cysteine 98, cysteine 144/cysteine 197, and cysteine 246/cysteine 295. N-linked (GlcNAc...) asparagine glycosylation occurs at asparagine 79. Asparagine 338 carries an N-linked (GlcNAc...) asparagine glycan. Cysteine 343 and cysteine 395 form a disulfide bridge. Residue asparagine 440 is glycosylated (N-linked (GlcNAc...) asparagine). An intrachain disulfide couples cysteine 445 to cysteine 496. The helical transmembrane segment at 544 to 564 (ALIGVSVAFLLFLFILIFILL) threads the bilayer. Residues 565 to 744 (RRRHQEKFRK…PGAVPKNKKQ (180 aa)) are Cytoplasmic-facing. A compositionally biased stretch (basic and acidic residues) spans 572–584 (FRKDDEDAQKGKE). Disordered regions lie at residues 572 to 617 (FRKD…ESLY), 630 to 652 (ELDT…VEPS), and 667 to 744 (EQLN…NKKQ). Positions 615-620 (SLYASV) match the ITIM motif 1 motif. Short sequence motifs (ITIM motif) lie at residues 695-700 (VTYAQL) and 725-730 (SVYAAL). Phosphotyrosine; by LYN occurs at positions 697 and 727.

In terms of assembly, interacts with LYN, PTPN6/SHP-1 and PTPN11/SHP-2. Post-translationally, phosphorylated on tyrosine residues by LYN. Phosphorylation at Tyr-697 and Tyr-727 is important for interaction with PTPN6/SHP-1 and PTPN11/SHP-2.

It is found in the cell membrane. Functionally, may act as receptor for class I MHC antigens. Becomes activated upon coligation with immune receptors, such as FCGR2B and the B-cell receptor. Down-regulates antigen-induced B-cell activation by recruiting phosphatases to its immunoreceptor tyrosine-based inhibitor motifs (ITIM). The sequence is that of Leukocyte immunoglobulin-like receptor subfamily B member 3A from Rattus norvegicus (Rat).